The sequence spans 92 residues: Alpha-elapitoxin-As2a (92 aa).

An N-terminal signal peptide occupies residues 1-21; it reads MKTLLLTLVVVTIVCLDLGDG. 5 disulfides stabilise this stretch: Cys-24-Cys-41, Cys-34-Cys-62, Cys-47-Cys-51, Cys-66-Cys-77, and Cys-78-Cys-83.

This sequence belongs to the three-finger toxin family. Long-chain subfamily. Type II alpha-neurotoxin sub-subfamily. In terms of tissue distribution, expressed by the venom gland.

The protein resides in the secreted. Functionally, binds with high affinity to muscular (alpha-1/CHRNA1) and neuronal (alpha-7/CHRNA7) nicotinic acetylcholine receptor (nAChR) and inhibits acetylcholine from binding to the receptor, thereby impairing neuromuscular and neuronal transmission. The protein is Alpha-elapitoxin-As2a of Austrelaps superbus (Lowland copperhead snake).